A 292-amino-acid chain; its full sequence is Bifunctional protein FolD (292 aa).

NADP(+)-binding positions include 166 to 168, serine 191, and isoleucine 232; that span reads GRS.

Belongs to the tetrahydrofolate dehydrogenase/cyclohydrolase family. Homodimer.

The catalysed reaction is (6R)-5,10-methylene-5,6,7,8-tetrahydrofolate + NADP(+) = (6R)-5,10-methenyltetrahydrofolate + NADPH. It carries out the reaction (6R)-5,10-methenyltetrahydrofolate + H2O = (6R)-10-formyltetrahydrofolate + H(+). Its pathway is one-carbon metabolism; tetrahydrofolate interconversion. Functionally, catalyzes the oxidation of 5,10-methylenetetrahydrofolate to 5,10-methenyltetrahydrofolate and then the hydrolysis of 5,10-methenyltetrahydrofolate to 10-formyltetrahydrofolate. This chain is Bifunctional protein FolD, found in Wolbachia pipientis wMel.